The primary structure comprises 250 residues: MEREEIVSFLDEYLSISSYPDKSSNGLQVEGKEEVERIAFAVDACLDTIAKARAFNADMLIVHHGIIWGGVSYVKGLFAKRLKALLSSEMNLYVAHIPLDVHPEVGNNVQLLKLLNLEPLEPFGEYKGIKIGYIGEFEEPKPLPMIAQILAEKLPVDYVRSYEFGLQEIKRVAVVSGAGGFAIEEASEKADLLITGEISHADYRTAEDLRVSVIAAGHYATETLGVKALMKLVREKFGVKTIFIDSPTGL.

5 residues coordinate a divalent metal cation: H63, H64, D100, H218, and E222.

Belongs to the GTP cyclohydrolase I type 2/NIF3 family. Homohexamer.

This Pyrococcus abyssi (strain GE5 / Orsay) protein is GTP cyclohydrolase 1 type 2 homolog.